We begin with the raw amino-acid sequence, 199 residues long: Adenylyl-sulfate kinase (199 aa).

35 to 42 contacts ATP; it reads GLSGSGKS. Ser-109 serves as the catalytic Phosphoserine intermediate.

This sequence belongs to the APS kinase family.

It carries out the reaction adenosine 5'-phosphosulfate + ATP = 3'-phosphoadenylyl sulfate + ADP + H(+). Its pathway is sulfur metabolism; hydrogen sulfide biosynthesis; sulfite from sulfate: step 2/3. Its function is as follows. Catalyzes the synthesis of activated sulfate. The protein is Adenylyl-sulfate kinase of Clostridium kluyveri (strain ATCC 8527 / DSM 555 / NBRC 12016 / NCIMB 10680 / K1).